Consider the following 621-residue polypeptide: MSLDISQYPVLAQANTPDELRQLPQAVLPQLADELRGFLLKSVGKSSGHFASGLGTVELTVALHYVYNTPFDRLIWDVGHQAYPHKILTGRRDAMHTIRQKGGIHPFPWREESEYDTFSVGHSGTSISAALAMAVAAEKEQAGRKVVSVIGDGAMTGGMVFEAMNHAGDLHNDMLVVLNDNEMSISENVGALNNHLAQLMSGRFYTTIRESSKKVLKGMPVIKEMAKRTEEHLKGMVVPGTMFEELGFNYIGPIDGHDVDALVETMRNMRNLSGPQILHIMTKKGRGYEPAEKDPIGWHAVPKFDPSTFEKPASKPSNPTFSQVFGKWLCDVAEKDKKVLGITPAMREGSGMVEFSQRFPKQYFDAAIAEQHAVTLGAGFACEGLKPVVAIYSTFLQRGYDQLIHDVALQKLPVLFAIDRGGIVGADGPTHQGAFDLSFMRTVPNMVIMAPSDENECRQMLYTGYCYNDGPTAVRYPRGSATGAPQIEEMTALPIGKGLIKRQGQKVAILNFGTLLASVLTAGESLDATVADMRFVKPLDVELIKELANSHDVLVTVEENAIMGGAGSGVLELLQQLKQPMPVLQLGLPDEFIKHGDSGEIIAELKLDAAGILEQIESYLA.

Thiamine diphosphate-binding positions include H80 and 121 to 123; that span reads GHS. D152 serves as a coordination point for Mg(2+). Thiamine diphosphate is bound by residues 153–154, N181, Y288, and E370; that span reads GA. N181 provides a ligand contact to Mg(2+).

This sequence belongs to the transketolase family. DXPS subfamily. In terms of assembly, homodimer. Requires Mg(2+) as cofactor. The cofactor is thiamine diphosphate.

It catalyses the reaction D-glyceraldehyde 3-phosphate + pyruvate + H(+) = 1-deoxy-D-xylulose 5-phosphate + CO2. Its pathway is metabolic intermediate biosynthesis; 1-deoxy-D-xylulose 5-phosphate biosynthesis; 1-deoxy-D-xylulose 5-phosphate from D-glyceraldehyde 3-phosphate and pyruvate: step 1/1. Functionally, catalyzes the acyloin condensation reaction between C atoms 2 and 3 of pyruvate and glyceraldehyde 3-phosphate to yield 1-deoxy-D-xylulose-5-phosphate (DXP). The protein is 1-deoxy-D-xylulose-5-phosphate synthase of Shewanella woodyi (strain ATCC 51908 / MS32).